Consider the following 344-residue polypeptide: Phosphoribosylformylglycinamidine cyclo-ligase (344 aa).

Belongs to the AIR synthase family.

It localises to the cytoplasm. The enzyme catalyses 2-formamido-N(1)-(5-O-phospho-beta-D-ribosyl)acetamidine + ATP = 5-amino-1-(5-phospho-beta-D-ribosyl)imidazole + ADP + phosphate + H(+). The protein operates within purine metabolism; IMP biosynthesis via de novo pathway; 5-amino-1-(5-phospho-D-ribosyl)imidazole from N(2)-formyl-N(1)-(5-phospho-D-ribosyl)glycinamide: step 2/2. This chain is Phosphoribosylformylglycinamidine cyclo-ligase, found in Haemophilus influenzae (strain PittGG).